Here is a 542-residue protein sequence, read N- to C-terminus: Membrane protein insertase YidC (542 aa).

Residues 6-26 (NILLIGLLFVSFLLWQQWQAD) traverse the membrane as a helical segment. The segment covering 32–41 (VAQTQSSVAP) has biased composition (polar residues). Residues 32–57 (VAQTQSSVAPSTVADAHSSDVPDADS) are disordered. Helical transmembrane passes span 326–346 (LVVD…LLMF), 350–370 (FVGN…GMLY), 421–441 (GGCL…WVLL), 458–478 (LSVQ…MFIM), and 501–521 (VIFT…WLVG).

The protein belongs to the OXA1/ALB3/YidC family. Type 1 subfamily. In terms of assembly, interacts with the Sec translocase complex via SecD. Specifically interacts with transmembrane segments of nascent integral membrane proteins during membrane integration.

It localises to the cell inner membrane. Its function is as follows. Required for the insertion and/or proper folding and/or complex formation of integral membrane proteins into the membrane. Involved in integration of membrane proteins that insert both dependently and independently of the Sec translocase complex, as well as at least some lipoproteins. Aids folding of multispanning membrane proteins. The sequence is that of Membrane protein insertase YidC from Shewanella piezotolerans (strain WP3 / JCM 13877).